Here is a 466-residue protein sequence, read N- to C-terminus: Proline--tRNA ligase (466 aa).

The protein belongs to the class-II aminoacyl-tRNA synthetase family. ProS type 3 subfamily. As to quaternary structure, homodimer.

Its subcellular location is the cytoplasm. The catalysed reaction is tRNA(Pro) + L-proline + ATP = L-prolyl-tRNA(Pro) + AMP + diphosphate. Its function is as follows. Catalyzes the attachment of proline to tRNA(Pro) in a two-step reaction: proline is first activated by ATP to form Pro-AMP and then transferred to the acceptor end of tRNA(Pro). The sequence is that of Proline--tRNA ligase from Picrophilus torridus (strain ATCC 700027 / DSM 9790 / JCM 10055 / NBRC 100828 / KAW 2/3).